Here is a 706-residue protein sequence, read N- to C-terminus: Kinesin-like protein KIF2A (706 aa).

Residues Met-1–Asp-217 are globular. The disordered stretch occupies residues Leu-66–Ile-139. Ser-75 carries the phosphoserine modification. 2 positions are modified to phosphothreonine: Thr-78 and Thr-97. Ser-100 bears the Phosphoserine mark. Lys-102 is modified (N6-acetyllysine). Polar residues predominate over residues Phe-123–Ile-139. Ser-135 and Ser-140 each carry phosphoserine. The interval Lys-165–Gln-186 is disordered. The Kinesin motor domain occupies Arg-223 to Leu-553. An ATP-binding site is contributed by Gly-313–Thr-320. Phosphoserine is present on residues Asp-556 and Gln-573. The stretch at Ala-660–Asn-699 forms a coiled coil.

This sequence belongs to the TRAFAC class myosin-kinesin ATPase superfamily. Kinesin family. MCAK/KIF2 subfamily. In terms of assembly, interacts with AURKA and PLK1. Interacts with PSRC1. Interacts with MCRS1; the interaction enhances recruitment of KIF2A to the minus ends of spindle microtubules which promotes chromosome alignment.

It is found in the cytoplasm. The protein resides in the cytoskeleton. The protein localises to the microtubule organizing center. It localises to the centrosome. Its subcellular location is the spindle pole. It is found in the spindle. In terms of biological role, plus end-directed microtubule-dependent motor required for normal brain development. May regulate microtubule dynamics during axonal growth. Required for normal progression through mitosis. Required for normal congress of chromosomes at the metaphase plate. Required for normal spindle dynamics during mitosis. Promotes spindle turnover. Implicated in formation of bipolar mitotic spindles. Has microtubule depolymerization activity. This chain is Kinesin-like protein KIF2A (KIF2A), found in Homo sapiens (Human).